The chain runs to 310 residues: Receptor homology region, transmembrane domain- and RING domain-containing protein 1 (310 aa).

Residues 1-25 (MRLVVSSCLLVAAPFLSSLLRVSLA) form the signal peptide. Residues 26–168 (TVVLNSISAS…NPPDRGSAWT (143 aa)) are Lumenal-facing. Residues cysteine 65 and cysteine 92 are joined by a disulfide bond. Asparagine 75 is a glycosylation site (N-linked (GlcNAc...) asparagine). One can recognise a PA domain in the interval 81–149 (TTKFALIIRG…VAGEILRKYA (69 aa)). A helical transmembrane segment spans residues 169–189 (VLAISFFSLLLIVTFLLIAFF). Residues 190 to 310 (APRHWTQWRG…FAFAQSSQSR (121 aa)) are Cytoplasmic-facing. The RING-type; atypical zinc-finger motif lies at 232 to 274 (CAICLEDYRFGESLRLLPCQHAFHLNCIDSWLTKWGTSCPVCK). Residues 284-293 (SEVHKRESPR) show a composition bias toward basic and acidic residues. The disordered stretch occupies residues 284 to 310 (SEVHKRESPRTDTSTSRFAFAQSSQSR). A compositionally biased stretch (polar residues) spans 294–310 (TDTSTSRFAFAQSSQSR).

In terms of tissue distribution, expressed in leaves, stems, flowers and siliques.

The protein resides in the prevacuolar compartment membrane. It localises to the protein storage vacuole membrane. It is found in the golgi apparatus membrane. In terms of biological role, involved in the trafficking of vacuolar proteins. Functions probably as a sorting receptor for protein trafficking to the protein storage vacuole (PSV) by binding the C-terminal vacuolar sorting determinant (VSD) of vacuolar-sorted proteins. The chain is Receptor homology region, transmembrane domain- and RING domain-containing protein 1 (RMR1) from Arabidopsis thaliana (Mouse-ear cress).